The primary structure comprises 775 residues: Ribonucleoside-diphosphate reductase large subunit (775 aa).

Residues T200, 215–216, G246, 427–431, and 606–610 each bind substrate; these read SC, NLCTE, and PTVSS. A disulfide bond links C216 and C444. N427 (proton acceptor) is an active-site residue. C429 acts as the Cysteine radical intermediate in catalysis. The active-site Proton acceptor is the E431.

Belongs to the ribonucleoside diphosphate reductase large chain family. Heterotetramer composed of a homodimer of the large subunit (R1) and a homodimer of the small subunit (R2). Larger multisubunit protein complex are also active, composed of (R1)n(R2)n.

It carries out the reaction a 2'-deoxyribonucleoside 5'-diphosphate + [thioredoxin]-disulfide + H2O = a ribonucleoside 5'-diphosphate + [thioredoxin]-dithiol. Its function is as follows. Ribonucleoside-diphosphate reductase holoenzyme provides the precursors necessary for viral DNA synthesis. Allows virus growth in non-dividing cells, as well as reactivation from latency in infected hosts. Catalyzes the biosynthesis of deoxyribonucleotides from the corresponding ribonucleotides. This is Ribonucleoside-diphosphate reductase large subunit from Homo sapiens (Human).